Reading from the N-terminus, the 315-residue chain is MSKKLRIIFAGTPDFAARHLDALLSSGHQIVGVFTQPDRPAGRGKKLMPGPVKVLAEKHNLPVFQPVSLRPQENQQLVSDLNADVMVVVAYGLILPKAVLDMPRLGCINVHGSLLPRWRGAAPIQRSLWAGDSETGVTIMRMDVGLDTGDMLYKLACPITAEDTSATLYDKLADLGPQGLIETLQQLADGKAQPEVQDEAFVTYAEKLSKEEAQLDWSLSAAQLERCIRAFNPWPMSWMTIDEQPVKIWKASVINREAKAEPGTIIEATREGIQVATADGILNLESLQPAGKKAMSAQDLLNSRREWFTPGTRLA.

113 to 116 (SLLP) contacts (6S)-5,6,7,8-tetrahydrofolate.

This sequence belongs to the Fmt family.

The enzyme catalyses L-methionyl-tRNA(fMet) + (6R)-10-formyltetrahydrofolate = N-formyl-L-methionyl-tRNA(fMet) + (6S)-5,6,7,8-tetrahydrofolate + H(+). Attaches a formyl group to the free amino group of methionyl-tRNA(fMet). The formyl group appears to play a dual role in the initiator identity of N-formylmethionyl-tRNA by promoting its recognition by IF2 and preventing the misappropriation of this tRNA by the elongation apparatus. This is Methionyl-tRNA formyltransferase from Enterobacter sp. (strain 638).